A 225-amino-acid polypeptide reads, in one-letter code: Uracil-DNA glycosylase (225 aa).

Residue aspartate 68 is the Proton acceptor of the active site.

The protein belongs to the uracil-DNA glycosylase (UDG) superfamily. UNG family.

It is found in the cytoplasm. The enzyme catalyses Hydrolyzes single-stranded DNA or mismatched double-stranded DNA and polynucleotides, releasing free uracil.. Its function is as follows. Excises uracil residues from the DNA which can arise as a result of misincorporation of dUMP residues by DNA polymerase or due to deamination of cytosine. The polypeptide is Uracil-DNA glycosylase (Parafrankia sp. (strain EAN1pec)).